A 525-amino-acid polypeptide reads, in one-letter code: Pre-mRNA-processing factor 19 homolog 2 (525 aa).

The 70-residue stretch at 1–70 (MNCAISGEVP…PKTLHTASIP (70 aa)) folds into the U-box domain. 7 WD repeats span residues 220–261 (TNKP…STLT), 262–301 (GHSK…NYAC), 307–346 (DHSA…CLAQ), 351–390 (SKNV…NVAK), 393–431 (GHTG…NFKS), 433–469 (LSAD…AEWN), and 478–517 (SGTG…KANV). The short motif at 409-424 (FLATAAEDGVRLWDLR) is the DWD box element.

It belongs to the WD repeat PRP19 family. In terms of assembly, homotetramer. Component of the multiprotein assembly MOS4-associated complex (MAC) at least composed of MOS4, CDC5, PRL1 and PRP19 which is related to the PRP19C/Prp19 complex/NTC/Nineteen complex identified in other organisms. Associated with the spliceosome.

It localises to the nucleus. It carries out the reaction S-ubiquitinyl-[E2 ubiquitin-conjugating enzyme]-L-cysteine + [acceptor protein]-L-lysine = [E2 ubiquitin-conjugating enzyme]-L-cysteine + N(6)-ubiquitinyl-[acceptor protein]-L-lysine.. Its pathway is protein modification; protein ubiquitination. Functionally, probable ubiquitin-protein ligase which is mainly involved pre-mRNA splicing and DNA repair. Component of the MAC complex that probably regulates defense responses through transcriptional control and thereby is essential for plant innate immunity. This is Pre-mRNA-processing factor 19 homolog 2 (PRP19B) from Arabidopsis thaliana (Mouse-ear cress).